A 515-amino-acid polypeptide reads, in one-letter code: 2-isopropylmalate synthase (515 aa).

The Pyruvate carboxyltransferase domain maps to 4 to 266; the sequence is IKFFDTTLRD…ETRLNLQEIK (263 aa). Mn(2+) contacts are provided by Asp13, His201, His203, and Asn237. The tract at residues 391 to 515 is regulatory domain; the sequence is QLSSIQVQYG…RAENEKVTTP (125 aa).

Belongs to the alpha-IPM synthase/homocitrate synthase family. LeuA type 1 subfamily. In terms of assembly, homodimer. Mn(2+) is required as a cofactor.

The protein resides in the cytoplasm. It catalyses the reaction 3-methyl-2-oxobutanoate + acetyl-CoA + H2O = (2S)-2-isopropylmalate + CoA + H(+). It functions in the pathway amino-acid biosynthesis; L-leucine biosynthesis; L-leucine from 3-methyl-2-oxobutanoate: step 1/4. Its function is as follows. Catalyzes the condensation of the acetyl group of acetyl-CoA with 3-methyl-2-oxobutanoate (2-ketoisovalerate) to form 3-carboxy-3-hydroxy-4-methylpentanoate (2-isopropylmalate). The polypeptide is 2-isopropylmalate synthase (Geobacillus thermodenitrificans (strain NG80-2)).